The following is a 358-amino-acid chain: MVSTTLPTQLETIRPGIKAPVKETLLTPRFYTTDFDKVANLVLTLQDEEIEAALEELRADYNRYHFVRNDDFKRSFDHIDGATRLAFIDFLERSCTSEFSGFLLFKELSRRLKNRSPKLAEAFHLLARDEARHAGFINKAMADFGLSLDLRYLTQKRTYTFFPPEWVIYTVYLSEKIGYWRYILMFRHLEKNPDHNIYPLFNYFECWCQDENRHGDFFKALLRSQTALWKTWQSRLWSRFFLLTVFVTHTLTVFERTDFYQSVGLDAKQYNVDVVTNTNATAARAFPEVLDTDNPKFFPRLEACASANEKLTAIANSEAPKLAKFCQKAPWIAVIIWQMICIFLQKPVDAEARRGMVC.

Belongs to the AcsF family. The cofactor is Fe cation.

It carries out the reaction Mg-protoporphyrin IX 13-monomethyl ester + 3 NADPH + 3 O2 + 2 H(+) = 3,8-divinyl protochlorophyllide a + 3 NADP(+) + 5 H2O. It participates in porphyrin-containing compound metabolism; chlorophyll biosynthesis (light-independent). Functionally, catalyzes the formation of the isocyclic ring in chlorophyll biosynthesis. Mediates the cyclase reaction, which results in the formation of divinylprotochlorophyllide (Pchlide) characteristic of all chlorophylls from magnesium-protoporphyrin IX 13-monomethyl ester (MgPMME). This chain is Magnesium-protoporphyrin IX monomethyl ester [oxidative] cyclase 2, found in Synechocystis sp. (strain ATCC 27184 / PCC 6803 / Kazusa).